A 328-amino-acid polypeptide reads, in one-letter code: Flotillin-like protein FloA (328 aa).

2 consecutive transmembrane segments (helical) span residues 9 to 29 and 30 to 50; these read LLIT…VPVG and LWIS…IGMR.

It belongs to the flotillin-like FloA family. In terms of assembly, homooligomerizes.

The protein localises to the cell membrane. The protein resides in the membrane raft. In terms of biological role, found in functional membrane microdomains (FMM) that may be equivalent to eukaryotic membrane rafts. FMMs are highly dynamic and increase in number as cells age. Flotillins are thought to be important factors in membrane fluidity. The polypeptide is Flotillin-like protein FloA (Exiguobacterium sp. (strain ATCC BAA-1283 / AT1b)).